A 291-amino-acid polypeptide reads, in one-letter code: Secretory carrier-associated membrane protein 5 (291 aa).

Over residues 1 to 10 the composition is skewed to basic and acidic residues; the sequence is MGGRYDRNTF. Positions 1 to 66 are disordered; it reads MGGRYDRNTF…GSGAQDLKKK (66 aa). The Cytoplasmic portion of the chain corresponds to 1–126; the sequence is MGGRYDRNTF…EILVRLQRLQ (126 aa). At S34 the chain carries Phosphoserine. A coiled-coil region spans residues 58 to 94; the sequence is SGAQDLKKKEKELQAKEADLRRREQDLKRKQDAAARA. 4 consecutive transmembrane segments (helical) span residues 127–147, 159–179, 194–214, and 242–262; these read YIAF…IIAV, IWLL…VLWY, FGWF…AAVA, and IFYF…IWVI. At 263–288 the chain is on the cytoplasmic side; sequence QQVYMYFRGSGKADDMRRDAARGAMR.

This sequence belongs to the SCAMP family.

It localises to the cell membrane. The protein localises to the cytoplasmic vesicle. Its subcellular location is the secretory vesicle membrane. In terms of biological role, probably involved in membrane trafficking. The chain is Secretory carrier-associated membrane protein 5 (SCAMP5) from Arabidopsis thaliana (Mouse-ear cress).